Consider the following 193-residue polypeptide: Potassium-transporting ATPase KdpC subunit (193 aa).

The chain crosses the membrane as a helical span at residues 7 to 27 (PALVLFALLSALTGLAYPLAV).

This sequence belongs to the KdpC family. In terms of assembly, the system is composed of three essential subunits: KdpA, KdpB and KdpC.

It localises to the cell inner membrane. In terms of biological role, part of the high-affinity ATP-driven potassium transport (or Kdp) system, which catalyzes the hydrolysis of ATP coupled with the electrogenic transport of potassium into the cytoplasm. This subunit acts as a catalytic chaperone that increases the ATP-binding affinity of the ATP-hydrolyzing subunit KdpB by the formation of a transient KdpB/KdpC/ATP ternary complex. This Variovorax paradoxus (strain S110) protein is Potassium-transporting ATPase KdpC subunit.